The following is a 267-amino-acid chain: Hydroxyethylthiazole kinase (267 aa).

Methionine 42 contributes to the substrate binding site. Cysteine 118 and threonine 162 together coordinate ATP. Glycine 189 lines the substrate pocket.

This sequence belongs to the Thz kinase family. Mg(2+) serves as cofactor.

The catalysed reaction is 5-(2-hydroxyethyl)-4-methylthiazole + ATP = 4-methyl-5-(2-phosphooxyethyl)-thiazole + ADP + H(+). It functions in the pathway cofactor biosynthesis; thiamine diphosphate biosynthesis; 4-methyl-5-(2-phosphoethyl)-thiazole from 5-(2-hydroxyethyl)-4-methylthiazole: step 1/1. Functionally, catalyzes the phosphorylation of the hydroxyl group of 4-methyl-5-beta-hydroxyethylthiazole (THZ). This Rubrobacter xylanophilus (strain DSM 9941 / JCM 11954 / NBRC 16129 / PRD-1) protein is Hydroxyethylthiazole kinase.